The primary structure comprises 564 residues: 5-aminolevulinate synthase, mitochondrial (564 aa).

The N-terminal 57 residues, 1-57 (MESITKVSMSVCPFVRSTSTQALRQLSQTSGALANQARQCPIAGNAIRAKEISIRSY), are a transit peptide targeting the mitochondrion. Substrate contacts are provided by Arg-113, Ser-226, and Lys-245. 3 residues coordinate pyridoxal 5'-phosphate: Ser-278, His-306, and Thr-350. Lys-353 is an active-site residue. Lys-353 carries the post-translational modification N6-(pyridoxal phosphate)lysine. Thr-382 and Thr-383 together coordinate pyridoxal 5'-phosphate. Substrate is bound at residue Thr-468.

Belongs to the class-II pyridoxal-phosphate-dependent aminotransferase family. Homodimer. The cofactor is pyridoxal 5'-phosphate.

The protein resides in the mitochondrion matrix. The enzyme catalyses succinyl-CoA + glycine + H(+) = 5-aminolevulinate + CO2 + CoA. The protein operates within porphyrin-containing compound metabolism; protoporphyrin-IX biosynthesis; 5-aminolevulinate from glycine: step 1/1. Functionally, catalyzes the synthesis of 5-aminolevulinate (ALA) from succinyl-CoA and glycine, the first and rate-limiting step in heme biosynthesis. The polypeptide is 5-aminolevulinate synthase, mitochondrial (HEM1) (Candida albicans (strain SC5314 / ATCC MYA-2876) (Yeast)).